A 159-amino-acid polypeptide reads, in one-letter code: Phosphopantetheine adenylyltransferase (159 aa).

Thr-9 contacts substrate. Residues 9–10 and His-17 contribute to the ATP site; that span reads TF. Residues Lys-41, Leu-73, and Arg-87 each coordinate substrate. Residues 88 to 90, Glu-98, and 123 to 129 each bind ATP; these read GLR and YSFISST.

It belongs to the bacterial CoaD family. In terms of assembly, homohexamer. It depends on Mg(2+) as a cofactor.

It localises to the cytoplasm. It catalyses the reaction (R)-4'-phosphopantetheine + ATP + H(+) = 3'-dephospho-CoA + diphosphate. It functions in the pathway cofactor biosynthesis; coenzyme A biosynthesis; CoA from (R)-pantothenate: step 4/5. Reversibly transfers an adenylyl group from ATP to 4'-phosphopantetheine, yielding dephospho-CoA (dPCoA) and pyrophosphate. The polypeptide is Phosphopantetheine adenylyltransferase (Pseudomonas putida (strain GB-1)).